Consider the following 145-residue polypeptide: uncharacterized protein (145 aa).

This sequence belongs to the asfivirus K145R family.

It localises to the virion. This is an uncharacterized protein from Ornithodoros (relapsing fever ticks).